The primary structure comprises 385 residues: NADH-ubiquinone oxidoreductase chain 2 (385 aa).

10 consecutive transmembrane segments (helical) span residues 12–32 (PVLV…SNWL), 34–50 (VYLA…ILVA), 66–86 (FVLG…LCGL), 112–132 (VITP…LSAA), 161–181 (VFSI…ATIF), 200–220 (LAYS…IGTF), 227–247 (LIYM…VLAL), 268–288 (AITL…IGFF), 291–311 (WWIL…LAVI), and 354–374 (LLIG…NLLL).

Belongs to the complex I subunit 2 family.

The protein resides in the mitochondrion inner membrane. The enzyme catalyses a ubiquinone + NADH + 5 H(+)(in) = a ubiquinol + NAD(+) + 4 H(+)(out). Functionally, core subunit of the mitochondrial membrane respiratory chain NADH dehydrogenase (Complex I) that is believed to belong to the minimal assembly required for catalysis. Complex I functions in the transfer of electrons from NADH to the respiratory chain. The immediate electron acceptor for the enzyme is believed to be ubiquinone. This Metridium senile (Brown sea anemone) protein is NADH-ubiquinone oxidoreductase chain 2 (ND2).